Here is a 163-residue protein sequence, read N- to C-terminus: uncharacterized protein (163 aa).

The segment at Pro-142–His-163 is disordered. The span at Lys-153–His-163 shows a compositional bias: polar residues.

It belongs to the RCAN family.

Its function is as follows. Inhibits calcineurin-dependent transcriptional responses by binding to the catalytic domain of calcineurin. This is an uncharacterized protein from Schizosaccharomyces pombe (strain 972 / ATCC 24843) (Fission yeast).